The sequence spans 430 residues: Probable transporter SCO4007 (430 aa).

A compositionally biased stretch (low complexity) spans 1 to 17; the sequence is MPSSPSSTTPAPTSTPA. Positions 1 to 26 are disordered; sequence MPSSPSSTTPAPTSTPAARREPSGKG. 11 consecutive transmembrane segments (helical) span residues 34-54, 70-90, 101-121, 126-146, 159-179, 188-208, 244-264, 275-295, 315-335, 362-382, and 383-403; these read LFLPLIALCTAVTAANIYLAA, AVAWLASVAQLGYAAGLLFFA, LVAALSLVATAALLTAAASAG, AGAVLVASAATVVPQLLVPLV, VAAVIAGLFTGVVAARVLGGL, AVFVGAAVLTAVLGLATAYIL, AGMYGAWSALWTSLALLLTEG, GLFGLFGLAASVVAPLAGGLV, VPLFWLGGQVMAALCAAAVLV, TAYVVAGFAGGALASALAGPA, and FGHWGWGGVCAVAGAWLVLGW.

This sequence belongs to the major facilitator superfamily.

It is found in the cell membrane. The protein is Probable transporter SCO4007 of Streptomyces coelicolor (strain ATCC BAA-471 / A3(2) / M145).